The following is a 383-amino-acid chain: Nuclear hormone receptor family member nhr-217 (383 aa).

Residues 53–127 (IPACPVCDVP…AGLQRDYVRQ (75 aa)) constitute a DNA-binding region (nuclear receptor). 2 consecutive NR C4-type zinc fingers follow at residues 56 to 77 (CPVC…CAAC) and 93 to 109 (CKRE…CRAC). The 212-residue stretch at 172-383 (ILKVSNSSLF…KLYVQIGIPF (212 aa)) folds into the NR LBD domain.

This sequence belongs to the nuclear hormone receptor family.

It is found in the nucleus. Functionally, orphan nuclear receptor. The protein is Nuclear hormone receptor family member nhr-217 (nhr-217) of Caenorhabditis elegans.